Consider the following 168-residue polypeptide: ATP synthase subunit b, sodium ion specific (168 aa).

A helical transmembrane segment spans residues 9–29 (VSIDINMFWQIINFLILMFFF).

The protein belongs to the ATPase B chain family. F-type ATPases have 2 components, F(1) - the catalytic core - and F(0) - the membrane proton channel. F(1) has five subunits: alpha(3), beta(3), gamma(1), delta(1), epsilon(1). F(0) has three main subunits: a(1), b(2) and c(10-14). The alpha and beta chains form an alternating ring which encloses part of the gamma chain. F(1) is attached to F(0) by a central stalk formed by the gamma and epsilon chains, while a peripheral stalk is formed by the delta and b chains.

It localises to the cell inner membrane. Functionally, f(1)F(0) ATP synthase produces ATP from ADP in the presence of a proton or sodium gradient. F-type ATPases consist of two structural domains, F(1) containing the extramembraneous catalytic core and F(0) containing the membrane proton channel, linked together by a central stalk and a peripheral stalk. During catalysis, ATP synthesis in the catalytic domain of F(1) is coupled via a rotary mechanism of the central stalk subunits to proton translocation. Component of the F(0) channel, it forms part of the peripheral stalk, linking F(1) to F(0). This Propionigenium modestum protein is ATP synthase subunit b, sodium ion specific (atpF).